The following is a 1578-amino-acid chain: FH1/FH2 domain-containing protein 3 (1578 aa).

Residues 18–405 (NSTNFPEPSR…DLCEKDEEEE (388 aa)) enclose the GBD/FH3 domain. 7 disordered regions span residues 324 to 518 (HEDG…DKLP), 535 to 824 (SPLL…GVNG), 915 to 942 (VGRG…KTES), 979 to 1013 (LGHR…VPPP), 1418 to 1462 (QQKQ…YAED), 1490 to 1514 (RTRS…PSVT), and 1528 to 1565 (SATQ…PEEA). Phosphoserine is present on residues Ser345 and Ser376. Over residues 368–383 (IQNIKSPLSAPTSPCS) the composition is skewed to polar residues. The segment covering 399-425 (EKDEEEEEEEEQPITEPNSEEEREDDA) has biased composition (acidic residues). Position 413 is a phosphothreonine (Thr413). Low complexity predominate over residues 434–446 (ASSASGQSSPGKD). A compositionally biased stretch (polar residues) spans 453 to 473 (ALHTTSSPTSQGRWLSASTAA). A compositionally biased stretch (low complexity) spans 553–583 (SNFSSNSFQSSRPSPGPSGSPSYASSFSSPQ). A compositionally biased stretch (polar residues) spans 584–598 (DTRSSPSGLLTSSFR). The stretch at 597–645 (FRQHQESLAAERERRRQEREERLQRIEREERNKFNREYLDKREEQRQAR) forms a coiled coil. Residues 599–651 (QHQESLAAERERRRQEREERLQRIEREERNKFNREYLDKREEQRQARGERYKY) show a composition bias toward basic and acidic residues. Low complexity-rich tracts occupy residues 675–684 (DLSLDLSLPA) and 692–701 (SSQSPSADSQ). Residues 751–761 (SQEEPVLELEP) show a composition bias toward acidic residues. Positions 762–782 (EERASLSEKERQNEEVNERDN) are enriched in basic and acidic residues. Over residues 784-793 (SASSISSSSS) the composition is skewed to low complexity. Residues 795–809 (LEREEKEDKLSEDRA) are compositionally biased toward basic and acidic residues. Residue Ser921 is modified to Phosphoserine. At Thr933 the chain carries Phosphothreonine. Residues 985-1013 (PGPPPPPPPTFLGLPPPPPPPLLDSVPPP) are compositionally biased toward pro residues. In terms of domain architecture, FH1 spans 985–1016 (PGPPPPPPPTFLGLPPPPPPPLLDSVPPPPVP). The 397-residue stretch at 1039–1435 (GQPAFTKKKK…HRERNKTRGK (397 aa)) folds into the FH2 domain. The span at 1420-1434 (KQKRANHRERNKTRG) shows a compositional bias: basic residues. The span at 1444–1456 (SGSSPAAPSQPQG) shows a compositional bias: low complexity. The 33-residue stretch at 1515 to 1547 (DDAADEIMDRIVKSATQVPSQRVVPRERKRSRA) folds into the DAD domain. A compositionally biased stretch (basic residues) spans 1541-1556 (ERKRSRANRKSLRRTL).

It belongs to the formin homology family. Interacts with nestin/NES-based interfilament (IF). Interacts with SQSTM1. As to expression, expressed in the heart, including left ventricle, kidney, brain and skeletal muscle, including soleus and tibialis anterior (at protein level).

The protein resides in the cytoplasm. It is found in the cytoskeleton. It localises to the myofibril. Its subcellular location is the sarcomere. The protein localises to the z line. In terms of biological role, may play a role in actin filament polymerization in cardiomyocytes. Actin-organizing protein that may cause stress fiber formation together with cell elongation. In Mus musculus (Mouse), this protein is FH1/FH2 domain-containing protein 3 (Fhod3).